The following is a 394-amino-acid chain: Mitogen-activated protein kinase homolog D5 (394 aa).

The 286-residue stretch at 62–347 (RPPIMPIGKG…VENALAHPYL (286 aa)) folds into the Protein kinase domain. ATP-binding positions include 68–76 (IGKGAYGIV) and K91. Catalysis depends on D188, which acts as the Proton acceptor. At T220 the chain carries Phosphothreonine. Positions 220-222 (TEY) match the TXY motif. Y222 carries the phosphotyrosine modification.

This sequence belongs to the protein kinase superfamily. CMGC Ser/Thr protein kinase family. MAP kinase subfamily. It depends on Mg(2+) as a cofactor. Post-translationally, dually phosphorylated on Thr-220 and Tyr-222, which activates the enzyme. In terms of tissue distribution, leaves, roots, root apices, and dormant and growing axillary buds.

It catalyses the reaction L-seryl-[protein] + ATP = O-phospho-L-seryl-[protein] + ADP + H(+). It carries out the reaction L-threonyl-[protein] + ATP = O-phospho-L-threonyl-[protein] + ADP + H(+). With respect to regulation, activated by tyrosine and threonine phosphorylation. The sequence is that of Mitogen-activated protein kinase homolog D5 from Pisum sativum (Garden pea).